The following is a 261-amino-acid chain: tRNA pseudouridine synthase A (261 aa).

Asp51 (nucleophile) is an active-site residue. Tyr109 is a binding site for substrate.

The protein belongs to the tRNA pseudouridine synthase TruA family. In terms of assembly, homodimer.

The enzyme catalyses uridine(38/39/40) in tRNA = pseudouridine(38/39/40) in tRNA. Formation of pseudouridine at positions 38, 39 and 40 in the anticodon stem and loop of transfer RNAs. The protein is tRNA pseudouridine synthase A of Psychromonas ingrahamii (strain DSM 17664 / CCUG 51855 / 37).